Here is a 299-residue protein sequence, read N- to C-terminus: Lathosterol oxidase (299 aa).

The next 3 helical transmembrane spans lie at 32–52 (ISLL…CATL), 79–99 (FTVK…LLEL), and 117–137 (IHLM…IYWI). Residues 124–252 (VSFLFFTDML…YFTLWDRIGG (129 aa)) enclose the Fatty acid hydroxylase domain. Positions 138–143 (HRGLHH) match the Histidine box-1 motif. A Histidine box-2 motif is present at residues 151-155 (HKPHH). Residues 186–206 (VFPLHKVVYLGLYVLVNVWTI) form a helical membrane-spanning segment. The Histidine box-3 signature appears at 228-233 (HHTDHH). Position 253 is a phosphoserine (Ser253). The tract at residues 280–299 (FAENGCKGKKVGNGEFTKNK) is disordered.

This sequence belongs to the sterol desaturase family. It depends on Fe cation as a cofactor.

The protein localises to the endoplasmic reticulum membrane. It carries out the reaction a Delta(7)-sterol + 2 Fe(II)-[cytochrome b5] + O2 + 2 H(+) = a Delta(5),Delta(7)-sterol + 2 Fe(III)-[cytochrome b5] + 2 H2O. The catalysed reaction is lathosterol + 2 Fe(II)-[cytochrome b5] + O2 + 2 H(+) = 7-dehydrocholesterol + 2 Fe(III)-[cytochrome b5] + 2 H2O. It catalyses the reaction 5alpha-cholesta-7,24-dien-3beta-ol + 2 Fe(II)-[cytochrome b5] + O2 + 2 H(+) = 7-dehydrodesmosterol + 2 Fe(III)-[cytochrome b5] + 2 H2O. It participates in steroid biosynthesis; cholesterol biosynthesis. In terms of biological role, catalyzes the penultimate step of the biosynthesis of cholesterol, the dehydrogenation of lathosterol into 7-dehydrocholesterol (7-DHC). Cholesterol is the major sterol component in mammalian membranes and a precursor for bile acid and steroid hormone synthesis. In addition to its essential role in cholesterol biosynthesis, it also indirectly regulates ferroptosis through the production of 7-DHC. By diverting the spread of damage caused by peroxyl radicals from the phospholipid components to its sterol nucleus, 7-DHC prevents this form of cell death. The chain is Lathosterol oxidase from Mus musculus (Mouse).